The sequence spans 162 residues: Shikimate kinase (162 aa).

ATP is bound at residue 10 to 15 (GAGKST). Position 14 (Ser-14) interacts with Mg(2+). Asp-28, Arg-52, and Gly-73 together coordinate substrate. Arg-113 provides a ligand contact to ATP. Arg-129 serves as a coordination point for substrate.

Belongs to the shikimate kinase family. Monomer. Requires Mg(2+) as cofactor.

Its subcellular location is the cytoplasm. It catalyses the reaction shikimate + ATP = 3-phosphoshikimate + ADP + H(+). It participates in metabolic intermediate biosynthesis; chorismate biosynthesis; chorismate from D-erythrose 4-phosphate and phosphoenolpyruvate: step 5/7. Its function is as follows. Catalyzes the specific phosphorylation of the 3-hydroxyl group of shikimic acid using ATP as a cosubstrate. This Lactococcus lactis subsp. cremoris (strain MG1363) protein is Shikimate kinase.